Consider the following 220-residue polypeptide: Vesicle-associated membrane protein 7 (220 aa).

Ala-2 carries the post-translational modification N-acetylalanine; partial. Residues 2–188 (AILFAVVARG…ARAMCMKNLK (187 aa)) are Cytoplasmic-facing. The region spanning 7 to 110 (VVARGTTILA…AMNSEFSSVL (104 aa)) is the Longin domain. The v-SNARE coiled-coil homology domain maps to 125–185 (KVMETQAQVD…RNLARAMCMK (61 aa)). 2 positions are modified to phosphoserine: Ser-167 and Ser-168. A helical; Anchor for type IV membrane protein membrane pass occupies residues 189–209 (LTIIIIIVSIVFIYIIVSPLC). At 210–220 (GGFTWPSCVKK) the chain is on the vesicular side.

This sequence belongs to the synaptobrevin family. Component of the SNARE complex composed of STX4, SNAP23 and VAMP7 that binds SYT7 during lysosomal exocytosis. Component of the SNARE complex composed of STX7, STX8, VAMP7 and VTI1B that is required for heterotypic fusion of late endosomes with lysosomes. May interact with STX17. Interacts with PICALM. Interacts with RAB21. Detected in all tissues tested.

Its subcellular location is the cytoplasmic vesicle. It localises to the secretory vesicle membrane. The protein resides in the golgi apparatus. The protein localises to the trans-Golgi network membrane. It is found in the late endosome membrane. Its subcellular location is the lysosome membrane. It localises to the endoplasmic reticulum membrane. The protein resides in the phagosome membrane. The protein localises to the synapse. It is found in the synaptosome. Its function is as follows. Involved in the targeting and/or fusion of transport vesicles to their target membrane during transport of proteins from the early endosome to the lysosome. Required for heterotypic fusion of late endosomes with lysosomes and homotypic lysosomal fusion. Required for calcium regulated lysosomal exocytosis. Involved in the export of chylomicrons from the endoplasmic reticulum to the cis Golgi. Required for exocytosis of mediators during eosinophil and neutrophil degranulation, and target cell killing by natural killer cells. Required for focal exocytosis of late endocytic vesicles during phagosome formation. This is Vesicle-associated membrane protein 7 (VAMP7) from Homo sapiens (Human).